Consider the following 541-residue polypeptide: Probable malate:quinone oxidoreductase (541 aa).

The disordered stretch occupies residues 520–541 (AKPAAGAAQQAKPAKATADIAL).

Belongs to the MQO family. Requires FAD as cofactor.

The catalysed reaction is (S)-malate + a quinone = a quinol + oxaloacetate. It functions in the pathway carbohydrate metabolism; tricarboxylic acid cycle; oxaloacetate from (S)-malate (quinone route): step 1/1. This chain is Probable malate:quinone oxidoreductase, found in Ralstonia nicotianae (strain ATCC BAA-1114 / GMI1000) (Ralstonia solanacearum).